We begin with the raw amino-acid sequence, 469 residues long: 3-isopropylmalate dehydratase large subunit (469 aa).

C347, C407, and C410 together coordinate [4Fe-4S] cluster.

Belongs to the aconitase/IPM isomerase family. LeuC type 1 subfamily. As to quaternary structure, heterodimer of LeuC and LeuD. It depends on [4Fe-4S] cluster as a cofactor.

The catalysed reaction is (2R,3S)-3-isopropylmalate = (2S)-2-isopropylmalate. The protein operates within amino-acid biosynthesis; L-leucine biosynthesis; L-leucine from 3-methyl-2-oxobutanoate: step 2/4. In terms of biological role, catalyzes the isomerization between 2-isopropylmalate and 3-isopropylmalate, via the formation of 2-isopropylmaleate. The sequence is that of 3-isopropylmalate dehydratase large subunit from Photorhabdus laumondii subsp. laumondii (strain DSM 15139 / CIP 105565 / TT01) (Photorhabdus luminescens subsp. laumondii).